A 277-amino-acid chain; its full sequence is Phosphoribosylaminoimidazole-succinocarboxamide synthase (277 aa).

It belongs to the SAICAR synthetase family.

It carries out the reaction 5-amino-1-(5-phospho-D-ribosyl)imidazole-4-carboxylate + L-aspartate + ATP = (2S)-2-[5-amino-1-(5-phospho-beta-D-ribosyl)imidazole-4-carboxamido]succinate + ADP + phosphate + 2 H(+). The protein operates within purine metabolism; IMP biosynthesis via de novo pathway; 5-amino-1-(5-phospho-D-ribosyl)imidazole-4-carboxamide from 5-amino-1-(5-phospho-D-ribosyl)imidazole-4-carboxylate: step 1/2. In Salinispora arenicola (strain CNS-205), this protein is Phosphoribosylaminoimidazole-succinocarboxamide synthase.